The chain runs to 336 residues: 4-aminobenzoate N-oxygenase (336 aa).

Y93 lines the 4-nitrobenzoate pocket. Residues E101, E136, H139, and E196 each contribute to the Fe cation site. N200 serves as a coordination point for 4-nitrobenzoate. Fe cation is bound by residues H223, E227, and H230.

It belongs to the AurF N-oxygenase family. Homodimer. It depends on Fe(2+) as a cofactor.

The enzyme catalyses 4-aminobenzoate + AH2 + 2 O2 = 4-nitrobenzoate + A + 2 H2O. It functions in the pathway antibiotic biosynthesis. In terms of biological role, involved in the biosynthesis of the polyketide antibiotic aureothin. Catalyzes the oxidation of p-aminobenzoate (pABA) to p-nitrobenzoate (pNBA), an unusual polyketide synthase starter unit. Reaction mechanism involves the generation of a peroxodiiron(III/III) intermediate, which effects the initial oxidation of p-aminobenzoate to p-hydroxylaminobenzoate (Ar-NHOH). Ar-NHOH is then probably directly converted to the fully oxidized p-nitrobenzoate via a four-electron N-oxidation, bypassing the formation of a nitroso compound. The polypeptide is 4-aminobenzoate N-oxygenase (Streptomyces thioluteus).